The following is a 311-amino-acid chain: Oligopeptide transport system permease protein OppC (311 aa).

At 1–48 the chain is on the cytoplasmic side; that stretch reads MTDYRTQPINQKNADFVEQVADRIEEMQLEGRSLWQDAKRRFFRNKAA. Residues 49–69 traverse the membrane as a helical segment; the sequence is VASLIILAFIIIFITVAPWFF. Over 70–113 the chain is Periplasmic; that stretch reads PFTYEDTDWNMMSAAPTMEGYHFFGTDASGRDLLVRTAIGGRIS. The 190-residue stretch at 110–299 folds into the ABC transmembrane type-1 domain; it reads GRISLLVGIA…LTLFCFNFIG (190 aa). The chain crosses the membrane as a helical span at residues 114–134; it reads LLVGIAGAFISVTIGTIYGAI. The Cytoplasmic segment spans residues 135–146; that stretch reads SGYVGGKTDMLM. The helical transmembrane segment at 147–169 threads the bilayer; sequence MRFLEILSSFPFMFFVILLVTLF. Topologically, residues 170 to 172 are periplasmic; that stretch reads GQN. A helical transmembrane segment spans residues 173–192; it reads IFLIFIAIGAIAWLGLARIV. Over 193–222 the chain is Cytoplasmic; the sequence is RGQTLSLKNKEFVEAAIVCGVPRRQIILKH. The chain crosses the membrane as a helical span at residues 223 to 243; that stretch reads IIPNVLGLVAVYASLEVPGLI. Residues 244 to 278 are Periplasmic-facing; it reads LFESFLSFLGLGTQEPMSSWGALLSDGAAQMEVSP. The helical transmembrane segment at 279–299 threads the bilayer; it reads WLLIFPAFFLCLTLFCFNFIG. Topologically, residues 300–311 are cytoplasmic; it reads DGLRDALDPKDR.

It belongs to the binding-protein-dependent transport system permease family. OppBC subfamily. As to quaternary structure, the complex is composed of two ATP-binding proteins (OppD and OppF), two transmembrane proteins (OppB and OppC) and a solute-binding protein (OppA).

Its subcellular location is the cell inner membrane. Its function is as follows. Part of the ABC transporter complex OppABCDF involved in the uptake of oligopeptides. Probably responsible for the translocation of the substrate across the membrane. The polypeptide is Oligopeptide transport system permease protein OppC (oppC) (Haemophilus influenzae (strain ATCC 51907 / DSM 11121 / KW20 / Rd)).